The primary structure comprises 184 residues: Alpha-tubulin N-acetyltransferase (184 aa).

Residues 1–170 (METFNHIDIK…NHFVIFSNYF (170 aa)) form the N-acetyltransferase domain. Acetyl-CoA is bound by residues 104–117 (FYIL…GLGI) and 140–149 (SYKLQNFLKK).

The protein belongs to the acetyltransferase ATAT1 family.

It catalyses the reaction L-lysyl-[alpha-tubulin] + acetyl-CoA = N(6)-acetyl-L-lysyl-[alpha-tubulin] + CoA + H(+). Functionally, specifically acetylates 'Lys-40' in alpha-tubulin on the lumenal side of microtubules. Promotes microtubule destabilization and accelerates microtubule dynamics; this activity may be independent of acetylation activity. Acetylates alpha-tubulin with a slow enzymatic rate, due to a catalytic site that is not optimized for acetyl transfer. Enters the microtubule through each end and diffuses quickly throughout the lumen of microtubules. Acetylates only long/old microtubules because of its slow acetylation rate since it does not have time to act on dynamically unstable microtubules before the enzyme is released. The polypeptide is Alpha-tubulin N-acetyltransferase (Plasmodium falciparum (isolate 3D7)).